The sequence spans 495 residues: Aspartyl/glutamyl-tRNA(Asn/Gln) amidotransferase subunit B (495 aa).

The protein belongs to the GatB/GatE family. GatB subfamily. As to quaternary structure, heterotrimer of A, B and C subunits.

It carries out the reaction L-glutamyl-tRNA(Gln) + L-glutamine + ATP + H2O = L-glutaminyl-tRNA(Gln) + L-glutamate + ADP + phosphate + H(+). The enzyme catalyses L-aspartyl-tRNA(Asn) + L-glutamine + ATP + H2O = L-asparaginyl-tRNA(Asn) + L-glutamate + ADP + phosphate + 2 H(+). Its function is as follows. Allows the formation of correctly charged Asn-tRNA(Asn) or Gln-tRNA(Gln) through the transamidation of misacylated Asp-tRNA(Asn) or Glu-tRNA(Gln) in organisms which lack either or both of asparaginyl-tRNA or glutaminyl-tRNA synthetases. The reaction takes place in the presence of glutamine and ATP through an activated phospho-Asp-tRNA(Asn) or phospho-Glu-tRNA(Gln). This is Aspartyl/glutamyl-tRNA(Asn/Gln) amidotransferase subunit B from Methylocella silvestris (strain DSM 15510 / CIP 108128 / LMG 27833 / NCIMB 13906 / BL2).